The sequence spans 149 residues: Probable flagellum biosynthesis repressor protein FlbT (149 aa).

This sequence belongs to the FlbT family.

In terms of biological role, has a post-transcriptional repressor function in flagellum biogenesis. Associates with the 5'-UTR of fljK mRNA and promotes its degradation. In Allorhizobium ampelinum (strain ATCC BAA-846 / DSM 112012 / S4) (Agrobacterium vitis (strain S4)), this protein is Probable flagellum biosynthesis repressor protein FlbT.